Consider the following 837-residue polypeptide: V-type proton ATPase 116 kDa subunit a 1 (837 aa).

Over M1–E388 the chain is Cytoplasmic. 2 positions are modified to phosphothreonine: T250 and T360. At Y364 the chain carries Phosphotyrosine. Residues I389–F407 form a helical membrane-spanning segment. Topologically, residues G408 to D409 are vacuolar. Residues F410–R426 traverse the membrane as a helical segment. Over E427–S441 the chain is Cytoplasmic. Residues T442–S471 form a helical membrane-spanning segment. At L472–S534 the chain is on the vacuolar side. An N-linked (GalNAc...) asparagine glycan is attached at N488. The chain crosses the membrane as a helical span at residues F535–L554. The Cytoplasmic segment spans residues S555–F572. Residues I573–K593 form a helical membrane-spanning segment. The Vacuolar segment spans residues W594–F638. The chain crosses the membrane as a helical span at residues L639 to L658. At R659–T724 the chain is on the cytoplasmic side. A helical transmembrane segment spans residues I725–A749. Over Q750–A770 the chain is Vacuolar. A helical membrane pass occupies residues G771–E809. Residues F810–E837 are Cytoplasmic-facing.

It belongs to the V-ATPase 116 kDa subunit family. In terms of assembly, V-ATPase is a heteromultimeric enzyme made up of two complexes: the ATP-hydrolytic V1 complex and the proton translocation V0 complex. The V1 complex consists of three catalytic AB heterodimers that form a heterohexamer, three peripheral stalks each consisting of EG heterodimers, one central rotor including subunits D and F, and the regulatory subunits C and H. The proton translocation complex V0 consists of the proton transport subunit a, a ring of proteolipid subunits c9c'', rotary subunit d, subunits e and f, and the accessory subunits ATP6AP1/Ac45 and ATP6AP2/PRR. Interacts with SPAAR.

It is found in the cytoplasmic vesicle. Its subcellular location is the clathrin-coated vesicle membrane. It localises to the secretory vesicle. The protein resides in the synaptic vesicle membrane. The protein localises to the melanosome. Its function is as follows. Subunit of the V0 complex of vacuolar(H+)-ATPase (V-ATPase), a multisubunit enzyme composed of a peripheral complex (V1) that hydrolyzes ATP and a membrane integral complex (V0) that transports protons across cellular membranes. V-ATPase is responsible for the acidification of various organelles, such as lysosomes, endosomes, the trans-Golgi network, and secretory granules, including synaptic vesicles. In certain cell types, can be exported to the plasma membrane, where it is involved in the acidification of the extracellular environment. Required for assembly and activity of the vacuolar ATPase. Through its action on compartment acidification, plays an essential role in neuronal development in terms of integrity and connectivity of neurons. In Homo sapiens (Human), this protein is V-type proton ATPase 116 kDa subunit a 1 (ATP6V0A1).